Consider the following 264-residue polypeptide: Ribosomal protein L11 methyltransferase (264 aa).

The S-adenosyl-L-methionine site is built by T116, G137, D159, and N200.

This sequence belongs to the methyltransferase superfamily. PrmA family.

Its subcellular location is the cytoplasm. It catalyses the reaction L-lysyl-[protein] + 3 S-adenosyl-L-methionine = N(6),N(6),N(6)-trimethyl-L-lysyl-[protein] + 3 S-adenosyl-L-homocysteine + 3 H(+). Methylates ribosomal protein L11. In Thermotoga petrophila (strain ATCC BAA-488 / DSM 13995 / JCM 10881 / RKU-1), this protein is Ribosomal protein L11 methyltransferase.